The chain runs to 241 residues: MKYQTLSGLLALSLLFGCSSSPDVVPDVPPSQLYSEAQTALQSGTWLTAIEKLEALDSRYPFGAYSEQVQLDLIYAYYKNDDLALGLATIERFTRLNPTHEKMDWVLYMRGLTHMAQDRNFMHDLFNIDRRDRDPEPVKAAFADFKKLLQRYPNSPYAEDAQRRMFALKNRLAEYDLATADFYLRREAWIAAINRTQELQKTYPDTEAARKSLEIQLEAYQQLGLTDAIERTKQLMQLNPL.

The N-terminal stretch at 1 to 17 (MKYQTLSGLLALSLLFG) is a signal peptide. Cysteine 18 carries the N-palmitoyl cysteine lipid modification. Cysteine 18 carries S-diacylglycerol cysteine lipidation.

It belongs to the BamD family. In terms of assembly, part of the Bam complex.

Its subcellular location is the cell outer membrane. Functionally, part of the outer membrane protein assembly complex, which is involved in assembly and insertion of beta-barrel proteins into the outer membrane. This chain is Outer membrane protein assembly factor BamD, found in Vibrio cholerae serotype O1 (strain ATCC 39315 / El Tor Inaba N16961).